The chain runs to 128 residues: Large ribosomal subunit protein bL19 (128 aa).

This sequence belongs to the bacterial ribosomal protein bL19 family.

This protein is located at the 30S-50S ribosomal subunit interface and may play a role in the structure and function of the aminoacyl-tRNA binding site. The polypeptide is Large ribosomal subunit protein bL19 (Azoarcus sp. (strain BH72)).